The primary structure comprises 120 residues: Large ribosomal subunit protein eL8 (120 aa).

This sequence belongs to the eukaryotic ribosomal protein eL8 family. As to quaternary structure, part of the 50S ribosomal subunit. Probably part of the RNase P complex.

It is found in the cytoplasm. In terms of biological role, multifunctional RNA-binding protein that recognizes the K-turn motif in ribosomal RNA, the RNA component of RNase P, box H/ACA, box C/D and box C'/D' sRNAs. The chain is Large ribosomal subunit protein eL8 from Methanosarcina acetivorans (strain ATCC 35395 / DSM 2834 / JCM 12185 / C2A).